A 388-amino-acid polypeptide reads, in one-letter code: Proline-rich protein 5 (388 aa).

Interaction with RICTOR stretches follow at residues 10–95 (MSSP…LTKG) and 188–218 (HESR…YGLH). Residues 12 to 31 (SPSLSDLGKREPAAAADERG) are disordered. Positions 18 to 31 (LGKREPAAAADERG) are enriched in basic and acidic residues. The residue at position 252 (S252) is a Phosphoserine. Positions 254-388 (SYNTPLLNPV…EGSGGRQSVV (135 aa)) are disordered. A compositionally biased stretch (polar residues) spans 336 to 346 (TRSSLPRSSPE).

It belongs to the PROTOR family. As to quaternary structure, associated component of the mechanistic target of rapamycin complex 2 (mTORC2). Binds directly to MTOR and RICTOR within the TORC2 complex. As to expression, most abundant in kidney and liver. Also highly expressed in brain, spleen, testis and placenta. Overexpressed in several colorectal tumors.

Its function is as follows. Associated subunit of mTORC2, which regulates cell growth and survival in response to hormonal signals. mTORC2 is activated by growth factors, but, in contrast to mTORC1, seems to be nutrient-insensitive. mTORC2 seems to function upstream of Rho GTPases to regulate the actin cytoskeleton, probably by activating one or more Rho-type guanine nucleotide exchange factors. PRR5 plays an important role in regulation of PDGFRB expression and in modulation of platelet-derived growth factor signaling. May act as a tumor suppressor in breast cancer. The chain is Proline-rich protein 5 (PRR5) from Homo sapiens (Human).